Reading from the N-terminus, the 241-residue chain is 2-heptyl-1-hydroxyquinolin-4(1H)-one methyltransferase (241 aa).

This sequence belongs to the methyltransferase superfamily. In terms of assembly, monomer.

The protein localises to the cytoplasm. It carries out the reaction 2-heptyl-1-hydroxy-4(1H)-quinolinone + S-adenosyl-L-methionine = 2-heptyl-1-methoxy-4(1H)-quinolinone + S-adenosyl-L-homocysteine + H(+). Functionally, involved in cellular response to chemical stress and may contribute to resistance toward antimicrobial natural compounds as well as drugs. Catalyzes the methylation and detoxification of the P.aeruginosa toxin 2-heptyl-1-hydroxy-4(1H)-quinolinone (HQNO) to 2-heptyl-1-methoxy-4(1H)-quinolinone (HMOQ). In Mycobacterium bovis (strain BCG / Pasteur 1173P2), this protein is 2-heptyl-1-hydroxyquinolin-4(1H)-one methyltransferase.